A 126-amino-acid chain; its full sequence is Protein ApaG (126 aa).

The ApaG domain occupies 2-126 (ADKLYQMEVQ…MTLVAPRVLH (125 aa)).

This is Protein ApaG from Chromobacterium violaceum (strain ATCC 12472 / DSM 30191 / JCM 1249 / CCUG 213 / NBRC 12614 / NCIMB 9131 / NCTC 9757 / MK).